Reading from the N-terminus, the 152-residue chain is MKTPIELKILDSRIGSQFPLPAYATPGSAGMDLRAMIETTMVIQPGETQLIPTGIAVHVADPSLAAVILPRSGMGHKHGIVLGNLVGLIDSDYQGPLMVSCWNRSNEPFTLEIGDRLAQLVFVPVVQAEFKLVDEFDTSDRGEGGFGHSGTQ.

Substrate-binding positions include 71-73, Asn84, 88-90, and Met98; these read RSG and LID.

Belongs to the dUTPase family. It depends on Mg(2+) as a cofactor.

The enzyme catalyses dUTP + H2O = dUMP + diphosphate + H(+). It participates in pyrimidine metabolism; dUMP biosynthesis; dUMP from dCTP (dUTP route): step 2/2. Its function is as follows. This enzyme is involved in nucleotide metabolism: it produces dUMP, the immediate precursor of thymidine nucleotides and it decreases the intracellular concentration of dUTP so that uracil cannot be incorporated into DNA. The sequence is that of Deoxyuridine 5'-triphosphate nucleotidohydrolase from Shewanella loihica (strain ATCC BAA-1088 / PV-4).